A 1980-amino-acid chain; its full sequence is Sodium channel protein type 8 subunit alpha (1980 aa).

Disordered regions lie at residues 1-20 and 28-62; these read MAARLLAPPGPDSFKPFTPE and RIAESKLKKPPKADGSHREDDEDSKPKPNSDLEAG. At 1 to 132 the chain is on the cytoplasmic side; the sequence is MAARLLAPPG…RIAIKILIHS (132 aa). Residues 28–61 show a composition bias toward basic and acidic residues; the sequence is RIAESKLKKPPKADGSHREDDEDSKPKPNSDLEA. An I repeat occupies 114-442; it reads ILSPFNLIRR…KAMLEQLKKQ (329 aa). The chain crosses the membrane as a helical span at residues 133–151; that stretch reads VFSMIIMCTILTNCVFMTF. Over 152–158 the chain is Extracellular; the sequence is SNPPDWS. The chain crosses the membrane as a helical span at residues 159–179; it reads KNVEYTFTGIYTFESLVKIIA. Topologically, residues 180-193 are cytoplasmic; it reads RGFCIDGFTFLRDP. The chain crosses the membrane as a helical span at residues 194-211; the sequence is WNWLDFSVIMMAYITEFV. At 212–217 the chain is on the extracellular side; sequence NLGNVS. An N-linked (GlcNAc...) asparagine glycan is attached at asparagine 215. A helical membrane pass occupies residues 218 to 234; the sequence is ALRTFRVLRALKTISVI. The Cytoplasmic portion of the chain corresponds to 235–253; that stretch reads PGLKTIVGALIQSVKKLSD. The chain crosses the membrane as a helical span at residues 254–273; the sequence is VMILTVFCLSVFALIGLQLF. Residues 274-355 lie on the Extracellular side of the membrane; it reads MGNLRNKCVV…PNYGYTSFDT (82 aa). A disulfide bridge connects residues cysteine 281 and cysteine 333. Residues asparagine 289, asparagine 295, and asparagine 308 are each glycosylated (N-linked (GlcNAc...) asparagine). Asparagine 326 carries an N-linked (GlcNAc...) (high mannose) asparagine glycan. An intramembrane region (pore-forming) is located at residues 356-380; sequence FSWAFLALFRLMTQDYWENLYQLTL. Glutamate 373 is a Na(+) binding site. At 381 to 387 the chain is on the extracellular side; the sequence is RAAGKTY. Residues 388 to 408 form a helical membrane-spanning segment; sequence MIFFVLVIFVGSFYLVNLILA. Topologically, residues 409-753 are cytoplasmic; it reads VVAMAYEEQN…EIVNLIVMDP (345 aa). Disordered stretches follow at residues 446 to 530 and 568 to 602; these read AQAA…KAFR and FRGPGRFRDPGSENEFADDEHSTVEESEGRRDSLF. Positions 474 to 486 are enriched in low complexity; sequence PRSSSEISKLSSK. The segment covering 489-500 has biased composition (basic residues); that stretch reads KERRNRRKKRKQ. Basic and acidic residues-rich tracts occupy residues 501–530 and 586–602; these read KELSEGEEKGDPEKVFKSESEDGMRRKAFR and DEHSTVEESEGRRDSLF. 2 positions are modified to phosphoserine: serine 518 and serine 520. An II repeat occupies 735–1007; sequence CHPYWIKLKE…QISVIRIKKG (273 aa). The helical transmembrane segment at 754 to 772 threads the bilayer; it reads FVDLAITICIVLNTLFMAM. The Extracellular segment spans residues 773 to 783; the sequence is EHHPMTPQFEH. Residues 784-803 form a helical membrane-spanning segment; that stretch reads VLAVGNLVFTGIFTAEMFLK. The Cytoplasmic portion of the chain corresponds to 804-817; sequence LIAMDPYYYFQEGW. A helical transmembrane segment spans residues 818-837; that stretch reads NIFDGFIVSLSLMELSLADV. Residues 838-839 are Extracellular-facing; the sequence is EG. Residues 840-857 form a helical membrane-spanning segment; sequence LSVLRSFRLLRVFKLAKS. At 858–873 the chain is on the cytoplasmic side; it reads WPTLNMLIKIIGNSVG. The helical transmembrane segment at 874–892 threads the bilayer; that stretch reads ALGNLTLVLAIIVFIFAVV. At 893-921 the chain is on the extracellular side; sequence GMQLFGKSYKECVCKINQDCELPRWHMHD. A disulfide bridge links cysteine 906 with cysteine 912. Residues 922 to 942 constitute an intramembrane region (pore-forming); that stretch reads FFHSFLIVFRVLCGEWIETMW. Positions 936 and 939 each coordinate Na(+). Residues 943–955 lie on the Extracellular side of the membrane; it reads DCMEVAGQAMCLI. An intrachain disulfide couples cysteine 944 to cysteine 953. A helical membrane pass occupies residues 956-976; the sequence is VFMMVMVIGNLVVLNLFLALL. The Cytoplasmic portion of the chain corresponds to 977-1199; that stretch reads LSSFSADNLA…TCFLIVEHNW (223 aa). The tract at residues 1107–1148 is disordered; sequence NLNTEDVSSESDPEGSKDKLDDTSSSEGSTIDIKPEVEEVPV. One copy of the III repeat lies at 1180–1495; it reads LGKSWWILRK…KKYYNAMKKL (316 aa). A helical membrane pass occupies residues 1200-1217; the sequence is FETFIIFMILLSSGALAF. At 1218 to 1230 the chain is on the extracellular side; the sequence is EDIYIEQRKTIRT. The chain crosses the membrane as a helical span at residues 1231–1249; the sequence is ILEYADKVFTYIFILEMLL. Over 1250–1263 the chain is Cytoplasmic; sequence KWTAYGFVKFFTNA. The chain crosses the membrane as a helical span at residues 1264 to 1282; sequence WCWLDFLIVAVSLVSLIAN. Over 1283–1290 the chain is Extracellular; sequence ALGYSELG. Residues 1291–1309 traverse the membrane as a helical segment; sequence AIKSLRTLRALRPLRALSR. At 1310–1326 the chain is on the cytoplasmic side; sequence FEGMRVVVNALVGAIPS. Residues 1327 to 1346 traverse the membrane as a helical segment; the sequence is IMNVLLVCLIFWLIFSIMGV. Residues 1347–1399 are Extracellular-facing; that stretch reads NLFAGKYHYCFNETSEIRFEIEDVNNKTECEKLMEGNNTEIRWKNVKINFDNV. An intrachain disulfide couples cysteine 1356 to cysteine 1376. N-linked (GlcNAc...) asparagine glycans are attached at residues asparagine 1358, asparagine 1372, and asparagine 1383. Positions 1400-1421 form an intramembrane region, pore-forming; sequence GAGYLALLQVATFKGWMDIMYA. Over 1422–1438 the chain is Extracellular; the sequence is AVDSRKPDEQPKYEDNI. A helical transmembrane segment spans residues 1439–1460; that stretch reads YMYIYFVIFIIFGSFFTLNLFI. At 1461 to 1523 the chain is on the cytoplasmic side; it reads GVIIDNFNQQ…IVFDFVTQQA (63 aa). Serine 1497 carries the phosphoserine; by PKC modification. The stretch at 1504–1801 is one IV repeat; it reads IPRPLNKIQG…WEKFDPDATQ (298 aa). A helical membrane pass occupies residues 1524-1541; it reads FDIVIMMLICLNMVTMMV. Residues 1542-1552 are Extracellular-facing; the sequence is ETDTQSKQMEN. Residues 1553–1571 form a helical membrane-spanning segment; the sequence is ILYWINLVFVIFFTCECVL. The Cytoplasmic portion of the chain corresponds to 1572 to 1583; that stretch reads KMFALRHYYFTI. A helical transmembrane segment spans residues 1584-1601; sequence GWNIFDFVVVILSIVGMF. Over 1602–1614 the chain is Extracellular; that stretch reads LADIIEKYFVSPT. Residues 1615-1631 traverse the membrane as a helical segment; the sequence is LFRVIRLARIGRILRLI. Over 1632–1650 the chain is Cytoplasmic; it reads KGAKGIRTLLFALMMSLPA. A helical transmembrane segment spans residues 1651-1668; the sequence is LFNIGLLLFLVMFIFSIF. Residues 1669–1690 lie on the Extracellular side of the membrane; it reads GMSNFAYVKHEAGIDDMFNFET. Residues 1691-1713 constitute an intramembrane region (pore-forming); that stretch reads FGNSMICLFQITTSAGWDGLLLP. Over 1714–1742 the chain is Extracellular; sequence ILNRPPDCSLDKEHPGSGFKGDCGNPSVG. An intrachain disulfide couples cysteine 1721 to cysteine 1736. A helical transmembrane segment spans residues 1743-1765; sequence IFFFVSYIIISFLIVVNMYIAII. Residues 1766–1980 are Cytoplasmic-facing; sequence LENFSVATEE…RQKEVRESKC (215 aa). The IQ domain occupies 1895 to 1924; the sequence is EEVSAVVLQRAYRGHLARRGFICKKTTSNK. Positions 1922–1980 are disordered; that stretch reads SNKLENGGTHREKKESTPSTASLPSYDSVTKPEKEKQQRAEEGRRERAKRQKEVRESKC. Positions 1938-1949 are enriched in polar residues; that stretch reads TPSTASLPSYDS. Positions 1951–1980 are enriched in basic and acidic residues; it reads TKPEKEKQQRAEEGRRERAKRQKEVRESKC.

It belongs to the sodium channel (TC 1.A.1.10) family. Nav1.6/SCN8A subfamily. As to quaternary structure, the voltage-sensitive sodium channel consists of an ion-conducting pore-forming alpha subunit regulated by one or more beta-1 (SCN1B), beta-2 (SCN2B), beta-3 (SCN3B) and/or beta-4 (SCN4B) subunits. Beta-1 (SCN1B) and beta-3 (SCN3B) are non-covalently associated with alpha, while beta-2 (SCN2B) and beta-4 (SCN4B) are covalently linked by disulfide bonds. Interacts with NEDD4 and NEDD4L. Interacts with FGF13. Interacts with FGF14, GBG3, GBB2 and SCN1B. Interacts with TMEM233. Interacts with the conotoxin GVIIJ. Interacts with the spider beta/delta-theraphotoxin-Pre1a. Interacts with CALM1; the interaction modulates the inactivation rate of SCN8A. In terms of processing, may be ubiquitinated by NEDD4L; which would promote its endocytosis. Post-translationally, phosphorylation at Ser-1497 by PKC in a highly conserved cytoplasmic loop slows inactivation of the sodium channel and reduces peak sodium currents. Expressed in the hippocampus with increased expression in epileptic tissue compared to normal adjacent tissue (at protein level). In terms of tissue distribution, expressed in non-neuronal tissues, such as monocytes/macrophages.

It is found in the cell membrane. The protein resides in the cell projection. The protein localises to the axon. Its subcellular location is the cytoplasmic vesicle. It localises to the podosome. The catalysed reaction is Na(+)(in) = Na(+)(out). Its activity is regulated as follows. Inhibited by tetrodotoxin and, more weakly, by its metabolite 4,9-ah-tetrodotoxin. Functionally, pore-forming subunit of a voltage-gated sodium channel complex assuming opened or closed conformations in response to the voltage difference across membranes and through which sodium ions selectively pass along their electrochemical gradient. Contributes to neuronal excitability by regulating action potential threshold and propagation. More specifically expressed in non-neuronal cells, could play a role in sodium release from intracellular compartments and participate in the control of podosomes formation and macrophages adhesion and movement. In Homo sapiens (Human), this protein is Sodium channel protein type 8 subunit alpha.